A 415-amino-acid chain; its full sequence is Gamma-glutamyl phosphate reductase (415 aa).

The protein belongs to the gamma-glutamyl phosphate reductase family.

Its subcellular location is the cytoplasm. The catalysed reaction is L-glutamate 5-semialdehyde + phosphate + NADP(+) = L-glutamyl 5-phosphate + NADPH + H(+). Its pathway is amino-acid biosynthesis; L-proline biosynthesis; L-glutamate 5-semialdehyde from L-glutamate: step 2/2. In terms of biological role, catalyzes the NADPH-dependent reduction of L-glutamate 5-phosphate into L-glutamate 5-semialdehyde and phosphate. The product spontaneously undergoes cyclization to form 1-pyrroline-5-carboxylate. This chain is Gamma-glutamyl phosphate reductase, found in Shouchella clausii (strain KSM-K16) (Alkalihalobacillus clausii).